The sequence spans 272 residues: uncharacterized protein (272 aa).

The disordered stretch occupies residues 101–130 (CPTGKKNKAPSSLIPKISKTSTSSLTKEDE). A compositionally biased stretch (low complexity) spans 110–125 (PSSLIPKISKTSTSSL). Ser142 is subject to Phosphoserine.

This is an uncharacterized protein from Arabidopsis thaliana (Mouse-ear cress).